We begin with the raw amino-acid sequence, 288 residues long: Protein PXR1 (288 aa).

Residues 25 to 72 (QSRFGHKHLMRFGWQPGQGLGTQPVQSMKTHIKVSIKDDNLGLGAKLK) form the G-patch domain. A disordered region spans residues 147 to 258 (SYSQMEKDSS…TSIPESVSTR (112 aa)). Residues 157 to 166 (SDEESDDDED) show a composition bias toward acidic residues. 2 stretches are compositionally biased toward basic residues: residues 169 to 185 (KKHK…KKRK) and 195 to 214 (KKKK…KDKK). Residues 238–256 (RTASIESSTSATSIPESVS) show a composition bias toward low complexity.

The protein belongs to the PINX1 family.

It is found in the nucleus. The protein resides in the nucleolus. Involved in rRNA-processing at A0, A1 and A2 sites and negatively regulates telomerase. The sequence is that of Protein PXR1 (PXR1) from Candida glabrata (strain ATCC 2001 / BCRC 20586 / JCM 3761 / NBRC 0622 / NRRL Y-65 / CBS 138) (Yeast).